A 190-amino-acid chain; its full sequence is Glutamyl-tRNA(Gln) amidotransferase subunit F, mitochondrial (190 aa).

It belongs to the GatF family. Subunit of the heterotrimeric GatFAB amidotransferase (AdT) complex, composed of A, B and F subunits.

It localises to the mitochondrion inner membrane. It carries out the reaction L-glutamyl-tRNA(Gln) + L-glutamine + ATP + H2O = L-glutaminyl-tRNA(Gln) + L-glutamate + ADP + phosphate + H(+). In terms of biological role, allows the formation of correctly charged Gln-tRNA(Gln) through the transamidation of misacylated Glu-tRNA(Gln) in the mitochondria. The reaction takes place in the presence of glutamine and ATP through an activated gamma-phospho-Glu-tRNA(Gln). Required for proper protein synthesis within the mitochondrion. The sequence is that of Glutamyl-tRNA(Gln) amidotransferase subunit F, mitochondrial from Eremothecium gossypii (strain ATCC 10895 / CBS 109.51 / FGSC 9923 / NRRL Y-1056) (Yeast).